Here is a 441-residue protein sequence, read N- to C-terminus: Double-stranded RNA-binding protein 1 (441 aa).

3 consecutive DRBM domains span residues Met-1 to Ser-71, Ser-86 to Gln-155, and Ser-169 to Asp-237. Residues Leu-69–Lys-88 form a disordered region.

Functionally, binds double-stranded RNA. In Oryza sativa subsp. japonica (Rice), this protein is Double-stranded RNA-binding protein 1 (DRB1).